The sequence spans 67 residues: ATP synthase F(0) complex subunit 8 (67 aa).

Residues 8–24 (TWFITITSMIMTLFILF) traverse the membrane as a helical segment. Lys54 bears the N6-acetyllysine; alternate mark. Position 54 is an N6-succinyllysine; alternate (Lys54). Lys57 carries the post-translational modification N6-acetyllysine.

The protein belongs to the ATPase protein 8 family. In terms of assembly, component of the ATP synthase complex composed at least of ATP5F1A/subunit alpha, ATP5F1B/subunit beta, ATP5MC1/subunit c (homooctomer), MT-ATP6/subunit a, MT-ATP8/subunit 8, ATP5ME/subunit e, ATP5MF/subunit f, ATP5MG/subunit g, ATP5MK/subunit k, ATP5MJ/subunit j, ATP5F1C/subunit gamma, ATP5F1D/subunit delta, ATP5F1E/subunit epsilon, ATP5PF/subunit F6, ATP5PB/subunit b, ATP5PD/subunit d, ATP5PO/subunit OSCP. ATP synthase complex consists of a soluble F(1) head domain (subunits alpha(3) and beta(3)) - the catalytic core - and a membrane F(0) domain - the membrane proton channel (subunits c, a, 8, e, f, g, k and j). These two domains are linked by a central stalk (subunits gamma, delta, and epsilon) rotating inside the F1 region and a stationary peripheral stalk (subunits F6, b, d, and OSCP). Interacts with PRICKLE3.

It localises to the mitochondrion membrane. Functionally, subunit 8, of the mitochondrial membrane ATP synthase complex (F(1)F(0) ATP synthase or Complex V) that produces ATP from ADP in the presence of a proton gradient across the membrane which is generated by electron transport complexes of the respiratory chain. ATP synthase complex consist of a soluble F(1) head domain - the catalytic core - and a membrane F(1) domain - the membrane proton channel. These two domains are linked by a central stalk rotating inside the F(1) region and a stationary peripheral stalk. During catalysis, ATP synthesis in the catalytic domain of F(1) is coupled via a rotary mechanism of the central stalk subunits to proton translocation. In vivo, can only synthesize ATP although its ATP hydrolase activity can be activated artificially in vitro. Part of the complex F(0) domain. The protein is ATP synthase F(0) complex subunit 8 of Sus scrofa (Pig).